The chain runs to 285 residues: Anamorsin homolog 1 (285 aa).

The segment at 1-150 (MEATVLLVTD…QKPTWETGSS (150 aa)) is N-terminal SAM-like domain. Positions 150–195 (SFSLKKKSVQKQESLPKPGALSVKPEMNVDLEDLIDEESLLSEEDL) are linker. Cys-206, Cys-215, Cys-218, and Cys-220 together coordinate [2Fe-2S] cluster. The interval 206–220 (CEVSTKRKACKNCTC) is fe-S binding site A. Positions 246, 249, 257, and 260 each coordinate [4Fe-4S] cluster. Short sequence motifs (cx2C motif) lie at residues 246 to 249 (CGNC) and 257 to 260 (CSSC). The interval 246-260 (CGNCGLGDAFRCSSC) is fe-S binding site B.

The protein belongs to the anamorsin family. As to quaternary structure, monomer. Requires [2Fe-2S] cluster as cofactor. [4Fe-4S] cluster is required as a cofactor.

It localises to the cytoplasm. The protein localises to the mitochondrion intermembrane space. In terms of biological role, component of the cytosolic iron-sulfur (Fe-S) protein assembly (CIA) machinery. Required for the maturation of extramitochondrial Fe-S proteins. Part of an electron transfer chain functioning in an early step of cytosolic Fe-S biogenesis, facilitating the de novo assembly of a [4Fe-4S] cluster on the cytosolic Fe-S scaffold complex. Electrons are transferred from NADPH via a FAD- and FMN-containing diflavin oxidoreductase. Together with the diflavin oxidoreductase, also required for the assembly of the diferric tyrosyl radical cofactor of ribonucleotide reductase (RNR), probably by providing electrons for reduction during radical cofactor maturation in the catalytic small subunit. The sequence is that of Anamorsin homolog 1 from Picea sitchensis (Sitka spruce).